Reading from the N-terminus, the 232-residue chain is Recombination protein RecR (232 aa).

The C4-type zinc-finger motif lies at 92 to 107 (CQVCFHLSAEPVCDIC). Residues 115–209 (SVICVVSDPR…KVTRIAFGLP (95 aa)) enclose the Toprim domain.

It belongs to the RecR family.

Functionally, may play a role in DNA repair. It seems to be involved in an RecBC-independent recombinational process of DNA repair. It may act with RecF and RecO. This chain is Recombination protein RecR, found in Synechocystis sp. (strain ATCC 27184 / PCC 6803 / Kazusa).